We begin with the raw amino-acid sequence, 376 residues long: Dual-specificity RNA methyltransferase RlmN (376 aa).

Catalysis depends on E95, which acts as the Proton acceptor. In terms of domain architecture, Radical SAM core spans 101–339 (EKERATLCVS…CIVRRPRGDD (239 aa)). An intrachain disulfide couples C108 to C344. [4Fe-4S] cluster contacts are provided by C115, C119, and C122. Residues 169 to 170 (GE), S201, 223 to 225 (SLH), and N301 contribute to the S-adenosyl-L-methionine site. C344 serves as the catalytic S-methylcysteine intermediate.

Belongs to the radical SAM superfamily. RlmN family. Requires [4Fe-4S] cluster as cofactor.

The protein localises to the cytoplasm. The enzyme catalyses adenosine(2503) in 23S rRNA + 2 reduced [2Fe-2S]-[ferredoxin] + 2 S-adenosyl-L-methionine = 2-methyladenosine(2503) in 23S rRNA + 5'-deoxyadenosine + L-methionine + 2 oxidized [2Fe-2S]-[ferredoxin] + S-adenosyl-L-homocysteine. It carries out the reaction adenosine(37) in tRNA + 2 reduced [2Fe-2S]-[ferredoxin] + 2 S-adenosyl-L-methionine = 2-methyladenosine(37) in tRNA + 5'-deoxyadenosine + L-methionine + 2 oxidized [2Fe-2S]-[ferredoxin] + S-adenosyl-L-homocysteine. Functionally, specifically methylates position 2 of adenine 2503 in 23S rRNA and position 2 of adenine 37 in tRNAs. m2A2503 modification seems to play a crucial role in the proofreading step occurring at the peptidyl transferase center and thus would serve to optimize ribosomal fidelity. The protein is Dual-specificity RNA methyltransferase RlmN of Pseudoalteromonas translucida (strain TAC 125).